Consider the following 398-residue polypeptide: 1-deoxy-D-xylulose 5-phosphate reductoisomerase (398 aa).

Residues Thr10, Gly11, Ser12, Ile13, Lys37, Asn38, and Asn124 each contribute to the NADPH site. Lys125 contacts 1-deoxy-D-xylulose 5-phosphate. Glu126 is an NADPH binding site. A Mn(2+)-binding site is contributed by Asp150. Residues Ser151, Glu152, Ser186, and His209 each coordinate 1-deoxy-D-xylulose 5-phosphate. Glu152 contacts Mn(2+). Position 215 (Gly215) interacts with NADPH. The 1-deoxy-D-xylulose 5-phosphate site is built by Ser222, Asn227, Lys228, and Glu231. Glu231 contacts Mn(2+).

The protein belongs to the DXR family. In terms of assembly, homodimer. Requires Mg(2+) as cofactor. It depends on Mn(2+) as a cofactor.

The enzyme catalyses 2-C-methyl-D-erythritol 4-phosphate + NADP(+) = 1-deoxy-D-xylulose 5-phosphate + NADPH + H(+). It functions in the pathway isoprenoid biosynthesis; isopentenyl diphosphate biosynthesis via DXP pathway; isopentenyl diphosphate from 1-deoxy-D-xylulose 5-phosphate: step 1/6. Its function is as follows. Catalyzes the NADPH-dependent rearrangement and reduction of 1-deoxy-D-xylulose-5-phosphate (DXP) to 2-C-methyl-D-erythritol 4-phosphate (MEP). This is 1-deoxy-D-xylulose 5-phosphate reductoisomerase from Buchnera aphidicola subsp. Schizaphis graminum (strain Sg).